A 152-amino-acid polypeptide reads, in one-letter code: Regulator of G-protein signaling 21 (152 aa).

The 117-residue stretch at 21-137 (NMDTLLANQA…LKSEIYKKLV (117 aa)) folds into the RGS domain.

In terms of tissue distribution, expressed ubiquitously.

Inhibits signal transduction by increasing the GTPase activity of G protein alpha subunits thereby driving them into their inactive GDP-bound form. The chain is Regulator of G-protein signaling 21 (RGS21) from Homo sapiens (Human).